A 198-amino-acid chain; its full sequence is Nucleoid occlusion factor SlmA (198 aa).

Positions 10 to 70 (NRREEILQSL…SLIEFIEDSL (61 aa)) constitute an HTH tetR-type domain. A DNA-binding region (H-T-H motif) is located at residues 33–52 (TTAKLAASVGVSEAALYRHF). Residues 117-144 (EQDRLQGRINQLFERIEAQLRQVLREKR) adopt a coiled-coil conformation.

Belongs to the nucleoid occlusion factor SlmA family. Homodimer. Interacts with FtsZ.

It localises to the cytoplasm. Its subcellular location is the nucleoid. Functionally, required for nucleoid occlusion (NO) phenomenon, which prevents Z-ring formation and cell division over the nucleoid. Acts as a DNA-associated cell division inhibitor that binds simultaneously chromosomal DNA and FtsZ, and disrupts the assembly of FtsZ polymers. SlmA-DNA-binding sequences (SBS) are dispersed on non-Ter regions of the chromosome, preventing FtsZ polymerization at these regions. This Salmonella typhi protein is Nucleoid occlusion factor SlmA.